Here is a 271-residue protein sequence, read N- to C-terminus: MDFIGRFEEIAGALKALAGTEKMGKIIVYTPPEKKDEPETCGYMEEGIIRRYYAGKDCHIYSNYPESSREISFHKEKEDRIIKNCLRKDRGTGKNQKKKKISRKKDNWKKRKEKSRLPEGYTLRPAVQADASAMASLYSQGFELYPTPLHMENYILETMHSNVLYFLVEKYGKIVSLASAEMDPKNRNAEITDCLTIPSERGKGHMKELIRALEKELSERSFLISYTLCRASAPGINAAFSSLGYAFTGRLVNNCRIGNGFEDMNIWCRML.

A disordered region spans residues 86 to 122; sequence LRKDRGTGKNQKKKKISRKKDNWKKRKEKSRLPEGYT. Residues 95-114 are compositionally biased toward basic residues; the sequence is NQKKKKISRKKDNWKKRKEK. The N-acetyltransferase domain maps to 121–269; sequence YTLRPAVQAD…GFEDMNIWCR (149 aa).

The protein belongs to the acetyltransferase family.

The enzyme catalyses (3S)-3,6-diaminohexanoate + acetyl-CoA = (3S)-6-acetamido-3-aminohexanoate + CoA + H(+). Functionally, catalyzes the acetylation of beta-lysine to N6-acetyl-beta-lysine, a compatible solute produced by methanogenic archaea that helps cells to cope with salt stress. The chain is Beta-lysine N(6)-acetyltransferase from Methanosarcina mazei (strain ATCC BAA-159 / DSM 3647 / Goe1 / Go1 / JCM 11833 / OCM 88) (Methanosarcina frisia).